A 284-amino-acid chain; its full sequence is Tropomyosin (284 aa).

Residues 1–284 (MEAIKNKMQA…DQTFAELTGY (284 aa)) are a coiled coil. Residues 22–43 (AEIAEQKSRDANLRAEKSEEEV) form a disordered region.

The protein belongs to the tropomyosin family. As to quaternary structure, homodimer.

Tropomyosin, in association with the troponin complex, plays a central role in the calcium dependent regulation of muscle contraction. This is Tropomyosin from Lepidoglyphus destructor (Storage mite).